We begin with the raw amino-acid sequence, 257 residues long: Acetylglutamate kinase (257 aa).

Residues 43-44 (GG), arginine 65, and asparagine 157 contribute to the substrate site. ATP is bound by residues 180–185 (DISGIL) and 208–210 (IIT).

Belongs to the acetylglutamate kinase family. ArgB subfamily. In terms of assembly, homodimer.

The protein resides in the cytoplasm. The enzyme catalyses N-acetyl-L-glutamate + ATP = N-acetyl-L-glutamyl 5-phosphate + ADP. The protein operates within amino-acid biosynthesis; L-arginine biosynthesis; N(2)-acetyl-L-ornithine from L-glutamate: step 2/4. Functionally, catalyzes the ATP-dependent phosphorylation of N-acetyl-L-glutamate. This chain is Acetylglutamate kinase, found in Sodalis glossinidius (strain morsitans).